The following is a 101-amino-acid chain: Small ribosomal subunit protein eS24 (101 aa).

Belongs to the eukaryotic ribosomal protein eS24 family.

This Methanosarcina mazei (strain ATCC BAA-159 / DSM 3647 / Goe1 / Go1 / JCM 11833 / OCM 88) (Methanosarcina frisia) protein is Small ribosomal subunit protein eS24.